We begin with the raw amino-acid sequence, 917 residues long: Translation initiation factor IF-2 (917 aa).

Residues 1–312 are disordered; it reads MEEQKSIKET…KGGREENENT (312 aa). Over residues 20–30 the composition is skewed to basic residues; the sequence is TKKKLVIKKKA. Residues 41-59 show a composition bias toward polar residues; it reads PGAQGQTTATEAKQSSPAS. Composition is skewed to basic and acidic residues over residues 60-76 and 95-118; these read SDKK…EAKR and RPDR…RKPE. Gly residues-rich tracts occupy residues 132–141, 167–256, and 281–293; these read SGGGQGGGNQ, QTGG…GYQG, and APGG…GPGG. A compositionally biased stretch (basic and acidic residues) spans 297-312; sequence RVFDKEKGGREENENT. The 174-residue stretch at 414-587 folds into the tr-type G domain; it reads TRPPVVTIMG…ELLDHKANPK (174 aa). Residues 423-430 are G1; it reads GHVDHGKT. Residue 423–430 coordinates GTP; the sequence is GHVDHGKT. The segment at 448–452 is G2; that stretch reads GITQH. Residues 469–472 form a G3 region; that stretch reads DTPG. Residues 469–473 and 523–526 contribute to the GTP site; these read DTPGH and NKID. A G4 region spans residues 523–526; that stretch reads NKID. Residues 559–561 form a G5 region; sequence SAK.

It belongs to the TRAFAC class translation factor GTPase superfamily. Classic translation factor GTPase family. IF-2 subfamily.

The protein localises to the cytoplasm. Functionally, one of the essential components for the initiation of protein synthesis. Protects formylmethionyl-tRNA from spontaneous hydrolysis and promotes its binding to the 30S ribosomal subunits. Also involved in the hydrolysis of GTP during the formation of the 70S ribosomal complex. This Leptospira biflexa serovar Patoc (strain Patoc 1 / ATCC 23582 / Paris) protein is Translation initiation factor IF-2.